The chain runs to 304 residues: Non-specific ribonucleoside hydrolase RihC (304 aa).

Residue H233 is part of the active site.

The protein belongs to the IUNH family. RihC subfamily.

Functionally, hydrolyzes both purine and pyrimidine ribonucleosides with a broad-substrate specificity. The chain is Non-specific ribonucleoside hydrolase RihC from Escherichia coli (strain 55989 / EAEC).